We begin with the raw amino-acid sequence, 59 residues long: UPF0434 protein Pnec_0311 (59 aa).

The protein belongs to the UPF0434 family.

The chain is UPF0434 protein Pnec_0311 from Polynucleobacter necessarius subsp. necessarius (strain STIR1).